The sequence spans 352 residues: Endoplasmic reticulum GDP-fucose transporter (352 aa).

10 helical membrane-spanning segments follow: residues 9–29 (LGML…ELII), 34–54 (GAGN…GLVF), 70–90 (YVIL…AFNF), 96–116 (LHMI…IVLL), 126–146 (SSVA…SGDV), 163–183 (FFWW…TAYM), 201–221 (ALFF…GNIV), 249–271 (LMLF…VYVL), 276–298 (ASLT…SIIY), and 305–325 (LNHW…ANVI). Residues 350–352 (KVE) carry the Prevents secretion from ER motif.

Belongs to the nucleotide-sugar transporter family. SLC35B subfamily.

It is found in the endoplasmic reticulum membrane. Its function is as follows. Sugar transporter that specifically mediates the transport of UDP-N-acetylglucosamine (UDP-GlcNAc), GDP-fucose and UDP-xylose. Functions redundantly with Gfr in the O-fucosylation of Notch, positively regulating Notch signaling. Involved in the biosynthesis of heparan sulfate-glycosaminoglycan (HS-GAG) and in Dpp signaling in the wing imaginal disk. In Drosophila melanogaster (Fruit fly), this protein is Endoplasmic reticulum GDP-fucose transporter.